The chain runs to 1912 residues: MEQDRTTHAEGTRLSPFLIAPPSPISHTEPLAVKLQNGSPLAERPHPEVNGDTKWQSSQSCYGISHMKGSQSSHESPHEDRGYSRCLQNGGIKRTVSEPSLSGLHPNKILKLDQKAKGESNIFEESQERNHGKSSRQPNVSGLSDNGEPVTSTTQESSGADAFPTRNYNGVEIQVLNEQEGEKGRSVTLLKNKIVLMPNGATVSAHSEENTRGELLEKTQCYPDCVSIAVQSTASHVNTPSSQAAIELSHEIPQPSLTSAQINFSQTSSLQLPPEPAAMVTKACDADNASKPAIVPGTCPFQKAEHQQKSALDIGPSRAENKTIQGSMELFAEEYYPSSDRNLQASHGSSEQYSKQKETNGAYFRQSSKFPKDSISPTTVTPPSQSLLAPRLVLQPPLEGKGALNDVALEEHHDYPNRSNRTLLREGKIDHQPKTSSSQSLNPSVHTPNPPLMLPEQHQNDCGSPSPEKSRKMSEYLMYYLPNHGHSGGLQEHSQYLMGHREQEIPKDANGKQTQGSVQAAPGWIELKAPNLHEALHQTKRKDISLHSVLHSQTGPVNQMSSKQSTGNVNMPGGFQRLPYLQKTAQPEQKAQMYQVQVNQGPSPGMGDQHLQFQKALYQECIPRTDPSSEAHPQAPSVPQYHFQQRVNPSSDKHLSQQATETQRLSGFLQHTPQTQASQTPASQNSNFPQICQQQQQQQLQRKNKEQMPQTFSHLQGSNDKQREGSCFGQIKVEESFCVGNQYSKSSNFQTHNNTQGGLEQVQNINKNFPYSKILTPNSSNLQILPSNDTHPACEREQALHPVGSKTSNLQNMQYFPNNVTPNQDVHRCFQEQAQKPQQASSLQGLKDRSQGESPAPPAEAAQQRYLVHNEAKALPVPEQGGSQTQTPPQKDTQKHAALRWLLLQKQEQQQTQQSQPGHNQMLRPIKTEPVSKPSSYRYPLSPPQENMSSRIKQEISSPSRDNGQPKSIIETMEQHLKQFQLKSLCDYKALTLKSQKHVKVPTDIQAAESENHARAAEPQATKSTDCSVLDDVSESDTPGEQSQNGKCEGCNPDKDEAPYYTHLGAGPDVAAIRTLMEERYGEKGKAIRIEKVIYTGKEGKSSQGCPIAKWVYRRSSEEEKLLCLVRVRPNHTCETAVMVIAIMLWDGIPKLLASELYSELTDILGKCGICTNRRCSQNETRNCCCQGENPETCGASFSFGCSWSMYYNGCKFARSKKPRKFRLHGAEPKEEERLGSHLQNLATVIAPIYKKLAPDAYNNQVEFEHQAPDCCLGLKEGRPFSGVTACLDFSAHSHRDQQNMPNGSTVVVTLNREDNREVGAKPEDEQFHVLPMYIIAPEDEFGSTEGQEKKIRMGSIEVLQSFRRRRVIRIGELPKSCKKKAEPKKAKTKKAARKRSSLENCSSRTEKGKSSSHTKLMENASHMKQMTAQPQLSGPVIRQPPTLQRHLQQGQRPQQPQPPQPQPQTTPQPQPQPQHIMPGNSQSVGSHCSGSTSVYTRQPTPHSPYPSSAHTSDIYGDTNHVNFYPTSSHASGSYLNPSNYMNPYLGLLNQNNQYAPFPYNGSVPVDNGSPFLGSYSPQAQSRDLHRYPNQDHLTNQNLPPIHTLHQQTFGDSPSKYLSYGNQNMQRDAFTTNSTLKPNVHHLATFSPYPTPKMDSHFMGAASRSPYSHPHTDYKTSEHHLPSHTIYSYTAAASGSSSSHAFHNKENDNIANGLSRVLPGFNHDRTASAQELLYSLTGSSQEKQPEVSGQDAAAVQEIEYWSDSEHNFQDPCIGGVAIAPTHGSILIECAKCEVHATTKVNDPDRNHPTRISLVLYRHKNLFLPKHCLALWEAKMAEKARKEEECGKNGSDHVSQKNHGKQEKREPTGPQEPSYLRFIQSLAENTGSVTTDSTVTTSPYAFTQVTGPYNTFV.

The span at 1–11 shows a compositional bias: basic and acidic residues; that stretch reads MEQDRTTHAEG. The interval 1-86 is disordered; the sequence is MEQDRTTHAE…PHEDRGYSRC (86 aa). Phosphoserine occurs at positions 15 and 23. The segment covering 53–74 has biased composition (polar residues); sequence TKWQSSQSCYGISHMKGSQSSH. 2 positions are modified to phosphoserine: Ser76 and Ser97. Disordered stretches follow at residues 112–166, 340–359, 367–388, 429–470, 673–723, 832–862, 907–966, and 1009–1052; these read LDQK…FPTR, DRNL…QKET, SSKF…QSLL, IDHQ…PEKS, PQTQ…DKQR, EQAQ…AEAA, QEQQ…NGQP, and ESEN…EGCN. Polar residues-rich tracts occupy residues 135 to 158, 340 to 353, 367 to 387, 434 to 447, and 673 to 689; these read SRQP…QESS, DRNL…SEQY, SSKF…SQSL, KTSS…SVHT, and PQTQ…SNFP. Over residues 690–701 the composition is skewed to low complexity; that stretch reads QICQQQQQQQLQ. Polar residues-rich tracts occupy residues 707–719 and 832–844; these read QMPQ…QGSN and EQAQ…SSLQ. Positions 907 to 921 are enriched in low complexity; it reads QEQQQTQQSQPGHNQ. 2 stretches are compositionally biased toward polar residues: residues 944 to 966 and 1036 to 1046; these read PQEN…NGQP and SDTPGEQSQNG. A Phosphoserine modification is found at Ser1036. Residues Cys1048, Cys1106, His1132, and Cys1134 each contribute to the Zn(2+) site. Arg1174 serves as a coordination point for 2-oxoglutarate. 4 residues coordinate Zn(2+): Cys1184, Cys1186, Cys1202, and Cys1211. The interaction with DNA stretch occupies residues 1203-1216; the sequence is SWSMYYNGCKFARS. A Glycyl lysine isopeptide (Lys-Gly) (interchain with G-Cter in ubiquitin) cross-link involves residue Lys1212. Residue Cys1271 participates in Zn(2+) binding. Cys1287 is a binding site for 2-oxoglutarate. Zn(2+) is bound at residue His1293. Residues His1295 and Asp1297 each contribute to the Fe cation site. Residue Asn1300 participates in substrate binding. His1329 provides a ligand contact to 2-oxoglutarate. Disordered stretches follow at residues 1379–1414 and 1444–1514; these read KKKA…SSSH and LQRH…HTSD. A compositionally biased stretch (basic residues) spans 1387 to 1396; it reads AKTKKAARKR. Residues 1456-1473 show a composition bias toward pro residues; sequence QPQPPQPQPQTTPQPQPQ. Polar residues predominate over residues 1480-1512; sequence GNSQSVGSHCSGSTSVYTRQPTPHSPYPSSAHT. Fe cation is bound at residue His1795. 1810 to 1812 lines the 2-oxoglutarate pocket; it reads RIS. Position 1816–1818 (1816–1818) interacts with substrate; the sequence is YRH. A Zn(2+)-binding site is contributed by His1826. Over residues 1842–1866 the composition is skewed to basic and acidic residues; that stretch reads EEECGKNGSDHVSQKNHGKQEKREP. Positions 1842 to 1871 are disordered; sequence EEECGKNGSDHVSQKNHGKQEKREPTGPQE.

The protein belongs to the TET family. As to quaternary structure, interacts with HCFC1. Interacts with OGT. Interacts with PROSER1; this interaction mediates TET2 O-GlcNAcylation and stability by promoting the interaction between OGT and TET2. Directly interacts (via C-terminus) with the DCAF1 component of the CRL4(VprBP) E3 ubiquitin-protein ligase complex. Requires Fe(2+) as cofactor. The cofactor is Zn(2+). May be glycosylated. It is unclear whether interaction with OGT leads to GlcNAcylation. According to a report, it is GlcNAcylated by OGT. In contrast, another group reports no GlcNAcylation by OGT in human ortholog. In terms of processing, monoubiquitinated at Lys-1212 by the DCX (DDB1-CUL4-X-box) E3 ubiquitin-protein ligase complex called CRL4(VprBP) or CUL4A-RBX1-DDB1-DCAF1/VPRBP complex; this modification promotes binding to DNA. Post-translationally, acetylated. As to expression, expressed in the brain, kidney, heart, lung, muscle and stomach. Expressed in germinal vesicle (GV) stage and MII-stage oocytes and in early embryos. Present in embryonic stem cells (ES cells).

It is found in the nucleus. The protein localises to the chromosome. The catalysed reaction is a 5-methyl-2'-deoxycytidine in DNA + 2-oxoglutarate + O2 = a 5-hydroxymethyl-2'-deoxycytidine in DNA + succinate + CO2. It catalyses the reaction a 5-hydroxymethyl-2'-deoxycytidine in DNA + 2-oxoglutarate + O2 = a 5-formyl-2'-deoxycytidine in DNA + succinate + CO2 + H2O. The enzyme catalyses a 5-formyl-2'-deoxycytidine in DNA + 2-oxoglutarate + O2 = a 5-carboxyl-2'-deoxycytidine in DNA + succinate + CO2 + H(+). In terms of biological role, dioxygenase that catalyzes the conversion of the modified genomic base 5-methylcytosine (5mC) into 5-hydroxymethylcytosine (5hmC) and plays a key role in active DNA demethylation. Has a preference for 5-hydroxymethylcytosine in CpG motifs. Also mediates subsequent conversion of 5hmC into 5-formylcytosine (5fC), and conversion of 5fC to 5-carboxylcytosine (5caC). Conversion of 5mC into 5hmC, 5fC and 5caC probably constitutes the first step in cytosine demethylation. Methylation at the C5 position of cytosine bases is an epigenetic modification of the mammalian genome which plays an important role in transcriptional regulation. In addition to its role in DNA demethylation, also involved in the recruitment of the O-GlcNAc transferase OGT to CpG-rich transcription start sites of active genes, thereby promoting histone H2B GlcNAcylation by OGT. This is Methylcytosine dioxygenase TET2 (Tet2) from Mus musculus (Mouse).